Reading from the N-terminus, the 605-residue chain is MLFCKNCGSQNNEGAKFCKQCGTPIGGGSKQANQETASTAETRQAPRKPIPKKTIILWSSIAAACVILFAAYKTGAYFTSKDRLVDKFEQAVNDGDQDQIATLLTPVNDNLKLTKNNVKPFLTYLKDHPDKKDELFASLRDETAQKDIVYAEKDGKSLLVFDHYDLKVAPVYFEVSSNYKNTDLYVNKEEAGSVKKADQAQTLGPYIPGEYTVSAKLKNDVVDLVKKEDIQAIGDSSFRVDLSLEADDVTFSLANDIKSGKGDLLINGKSIHKDPFKSVTYGPLLTDGSMTASVEAEFPWGKTKTAGVPIDDKEMELTLIPDQDTQEQIMNTIVKTTKQYSKALSDGNTAQMTEASANWKAETKDTVDSMKSADSYLKDRYLETDFDLDTFALSQKNDGTWQVSVTGKELHQSSSYNDYTKSEMTDDSPSYEYLLSYDKKQKKWIFEDAESTFESAGTNIKKIKNDKPETYTSAWAGSKNKGSESSASGDVTDEQVTLFMGSYLQSQADAVNQNNFSLMEDSLEKGSSLYSDQQHLVSKLNKEGTTEDFNNYEVKSWSQNGSAITIKTYEEFYITKSGGSPKLRTYNWTYTGVVKNGRIYLTSIQ.

The helical transmembrane segment at 56–78 (ILWSSIAAACVILFAAYKTGAYF) threads the bilayer.

It is found in the cell membrane. This is an uncharacterized protein from Bacillus subtilis (strain 168).